Reading from the N-terminus, the 122-residue chain is Large ribosomal subunit protein uL14 (122 aa).

Belongs to the universal ribosomal protein uL14 family. As to quaternary structure, part of the 50S ribosomal subunit. Forms a cluster with proteins L3 and L19. In the 70S ribosome, L14 and L19 interact and together make contacts with the 16S rRNA in bridges B5 and B8.

In terms of biological role, binds to 23S rRNA. Forms part of two intersubunit bridges in the 70S ribosome. The polypeptide is Large ribosomal subunit protein uL14 (Streptococcus pneumoniae (strain JJA)).